A 213-amino-acid chain; its full sequence is Ras-related protein Rab-39B (213 aa).

Positions 17, 20, 21, 22, 23, 37, and 40 each coordinate GTP. Position 22 (S22) interacts with Mg(2+). The switch-I stretch occupies residues Q35–V43. 2 residues coordinate Mg(2+): T40 and D64. The GTP site is built by G67, H123, K124, D126, A154, and R155. The segment at G67–V83 is switch-II. Phosphoserine is present on S201. S-geranylgeranyl cysteine attachment occurs at residues C211 and C213. Cysteine methyl ester is present on C213.

Belongs to the small GTPase superfamily. Rab family. Interacts (GDP-bound) with C9orf72; C9orf72 in complex with SMCR8 acts as a GEF for RAB39B. Interacts (in GTP-bound form) with PICK1 (via PDZ domain); a PICK1 homodimer may allow simultaneous association of RAB39B and GRIA2 to PICK1 which is involved in GRIA2 trafficking. Interacts with isoform c of RASSF1; the interaction is strong. Interacts with isoform a of RASSF1; the interaction is weak. Interacts with the DLG4/PSD-95. Interacts (GTP-bound) with HOPS complex components VPS39 and VPS41. Mg(2+) is required as a cofactor.

It is found in the cell membrane. It localises to the cytoplasmic vesicle membrane. The protein resides in the golgi apparatus. The protein localises to the cytoplasmic vesicle. Its subcellular location is the autophagosome membrane. It is found in the autolysosome membrane. It catalyses the reaction GTP + H2O = GDP + phosphate + H(+). With respect to regulation, regulated by guanine nucleotide exchange factors (GEFs) including C9orf72-SMCR8 complex, which promote the exchange of bound GDP for free GTP. Regulated by GTPase activating proteins (GAPs) which increase the GTP hydrolysis activity. Inhibited by GDP dissociation inhibitors (GDIs). Functionally, the small GTPases Rab are key regulators of intracellular membrane trafficking, from the formation of transport vesicles to their fusion with membranes. Rabs cycle between an inactive GDP-bound form and an active GTP-bound form that is able to recruit to membranes different sets of downstream effectors directly responsible for vesicle formation, movement, tethering and fusion. RAB39B is involved in autophagy and may function in autophagosome formation. Binds downstream effector PICK1 to ensure selectively GRIA2 exit from the endoplasmic reticulum to the Golgi and to regulate AMPAR composition at the post-synapses and thus synaptic transmission. May regulate the homeostasis of SNCA/alpha-synuclein. The sequence is that of Ras-related protein Rab-39B (RAB39B) from Bos taurus (Bovine).